The sequence spans 233 residues: Mediator of RNA polymerase II transcription subunit 8 (233 aa).

The tract at residues 204–233 (RGEVDRGSSSQEGLSTNNEQSGDKDIIMAD) is disordered. Over residues 210–223 (GSSSQEGLSTNNEQ) the composition is skewed to polar residues. The span at 224–233 (SGDKDIIMAD) shows a compositional bias: basic and acidic residues.

Belongs to the Mediator complex subunit 8 family. In terms of assembly, component of the Mediator complex.

It localises to the nucleus. Its function is as follows. Component of the Mediator complex, a coactivator involved in the regulated transcription of nearly all RNA polymerase II-dependent genes. Mediator functions as a bridge to convey information from gene-specific regulatory proteins to the basal RNA polymerase II transcription machinery. Mediator is recruited to promoters by direct interactions with regulatory proteins and serves as a scaffold for the assembly of a functional preinitiation complex with RNA polymerase II and the general transcription factors. In Candida glabrata (strain ATCC 2001 / BCRC 20586 / JCM 3761 / NBRC 0622 / NRRL Y-65 / CBS 138) (Yeast), this protein is Mediator of RNA polymerase II transcription subunit 8 (MED8).